A 341-amino-acid polypeptide reads, in one-letter code: S-adenosylmethionine:tRNA ribosyltransferase-isomerase (341 aa).

It belongs to the QueA family. Monomer.

It is found in the cytoplasm. The enzyme catalyses 7-aminomethyl-7-carbaguanosine(34) in tRNA + S-adenosyl-L-methionine = epoxyqueuosine(34) in tRNA + adenine + L-methionine + 2 H(+). The protein operates within tRNA modification; tRNA-queuosine biosynthesis. Transfers and isomerizes the ribose moiety from AdoMet to the 7-aminomethyl group of 7-deazaguanine (preQ1-tRNA) to give epoxyqueuosine (oQ-tRNA). This Herminiimonas arsenicoxydans protein is S-adenosylmethionine:tRNA ribosyltransferase-isomerase.